The primary structure comprises 122 residues: Lectin A (122 aa).

Y38 is a binding site for Ca(2+). Residues E44, Q57, and D96 each contribute to the an alpha-D-galactoside site. Ca(2+) contacts are provided by D96, T100, D103, and N104. D103 is a binding site for an alpha-D-galactoside.

This sequence belongs to the LecA/PllA lectin family. Homotetramer.

In terms of biological role, lectin that specifically binds alpha-galactoside-terminating glycoconjugates. Shows high apparent binding to the alpha-Gal epitope (Gal-alpha-1,3-Gal-beta-1,4-GlcNAc terminating glycans) as well as to Gal-alpha-1,4-GlcNAc and Gal-alpha-1,3-GalNAc. Gal-alpha-1,3-GalNAc may be one natural ligand bound by PllA both in the nematode symbiont and in infected insects. The sequence is that of Lectin A from Photorhabdus laumondii subsp. laumondii (strain DSM 15139 / CIP 105565 / TT01) (Photorhabdus luminescens subsp. laumondii).